The following is a 242-amino-acid chain: MSKRLLLLSNSTNIGEEYLFYARQEIKNFLGSSVKKIAFIPFAAVTSTYQHYSEKVRKVFQDIGYEFDAIHLVESSHELIKNAEAVVVGGGNTFHLIHCLHETKLLDDIRNKVSNGTPYIGWSAGSNVACPTIKTSNDMPIIEPISFQGLNLVPFQINPHYTNAVIPNHNGETREQRLEDFLVLNPDIYVVGLPEGTMLKIEDSSIRLIGNKTIYLFKFGEEKQEYYPHDNLDFLLERASFT.

Catalysis depends on charge relay system residues S123, D138, and H160.

The protein belongs to the peptidase S51 family.

Its subcellular location is the cytoplasm. The catalysed reaction is Dipeptidase E catalyzes the hydrolysis of dipeptides Asp-|-Xaa. It does not act on peptides with N-terminal Glu, Asn or Gln, nor does it cleave isoaspartyl peptides.. Its function is as follows. Hydrolyzes dipeptides containing N-terminal aspartate residues. May play a role in allowing the cell to use peptide aspartate to spare carbon otherwise required for the synthesis of the aspartate family of amino acids. This Nostoc sp. (strain PCC 7120 / SAG 25.82 / UTEX 2576) protein is Peptidase E.